A 113-amino-acid chain; its full sequence is Iron-sulfur cluster insertion protein ErpA (113 aa).

Iron-sulfur cluster contacts are provided by Cys-41, Cys-105, and Cys-107.

This sequence belongs to the HesB/IscA family. In terms of assembly, homodimer. It depends on iron-sulfur cluster as a cofactor.

Functionally, required for insertion of 4Fe-4S clusters for at least IspG. This Photobacterium profundum (strain SS9) protein is Iron-sulfur cluster insertion protein ErpA.